We begin with the raw amino-acid sequence, 462 residues long: NAD(P) transhydrogenase subunit beta (462 aa).

Residues 1-3 (MSG) are Periplasmic-facing. Residues 4 to 24 (GLVTAAYIVAAILFIFSLAGL) form a helical membrane-spanning segment. Over 25–45 (SKHETSRQGNNFGIAGMAIAL) the chain is Cytoplasmic. The helical transmembrane segment at 46–66 (IATIFGPDTGNVGWILLAMVI) threads the bilayer. Residues 67–82 (GGAIGIRLAKKVEMTE) lie on the Periplasmic side of the membrane. The helical transmembrane segment at 83-103 (MPELVAILHSFVGLAAVLVGF) threads the bilayer. The Cytoplasmic segment spans residues 104-115 (NSYLHHDAGMAP). The chain crosses the membrane as a helical span at residues 116-136 (ILVNIHLTEVFLGIFIGAVTF). Residues 137–164 (TGSVVAFGKLCGKISSKPLMLPNRHKMN) lie on the Periplasmic side of the membrane. A helical transmembrane segment spans residues 165–185 (LAALVVSFLLLIVFVRTDSVG). Residues 186-188 (LQV) are Cytoplasmic-facing. The chain crosses the membrane as a helical span at residues 189 to 209 (LALLIMTAIALVFGWHLVASI). The Periplasmic segment spans residues 210–215 (GGADMP). The helical transmembrane segment at 216 to 236 (VVVSMLNSYSGWAAAAAGFML) threads the bilayer. Over 237 to 239 (SND) the chain is Cytoplasmic. A helical transmembrane segment spans residues 240–260 (LLIVTGALVGSSGAILSYIMC). Residues 261-308 (KAMNRSFISVIAGGFGTDGSSTGDDQEVGEHREITAEETAELLKNSHS) are Periplasmic-facing. A helical membrane pass occupies residues 309 to 329 (VIITPGYGMAVAQAQYPVAEI). Over 330-462 (TEKLRARGIN…ASVDAILKAL (133 aa)) the chain is Cytoplasmic.

The protein belongs to the PNT beta subunit family. As to quaternary structure, heterodimer of an alpha and a beta chain.

The protein localises to the cell inner membrane. The catalysed reaction is NAD(+) + NADPH + H(+)(in) = NADH + NADP(+) + H(+)(out). The transhydrogenation between NADH and NADP is coupled to respiration and ATP hydrolysis and functions as a proton pump across the membrane. The polypeptide is NAD(P) transhydrogenase subunit beta (pntB) (Escherichia coli O157:H7).